The chain runs to 38 residues: Defensin-1 (38 aa).

Cystine bridges form between C4–C25, C11–C33, and C15–C35.

The protein resides in the secreted. Has antibacterial activity against the Gram-positive bacteria L.lactis and S.aureus, and against the Gram-negative bacteria E.coli D32 and V.parahemolyticus. The protein is Defensin-1 of Crassostrea virginica (Eastern oyster).